A 714-amino-acid polypeptide reads, in one-letter code: MSVSSNDPEQRNGRGMASGNNVDMSLYPPFIKQLDAKLPDYTREGDIEYPFEEITGVGDENRIRGNWSNKSDYLLAVIGFTAGVGSFWKFPFLVFQHGGAAFLVPYLCMLCLASLPMFFMEMVLGQFSSSAAISVWKVVPLFKGIGFAQVTISGFFAVFFNIISAWTLFYLINSFSFSIPWSNCANSWSGENCTLGTRIQCKEMNGTLLVNGSCIVEHASSNETTVIPLHDLGSIPSLKYFHNDVLMLSKGVDDFGTLNWYLGLCVLACWIAVFLCLFQGVKSSGKVVYVAVIVPFIILTVLLTRLLTLDGSLAAVFYFLTPKWEILMDLHVWGEAAVQAFYSVSCCSGGLFTIASYSRFHNNIYKDIWLVLIVDVIVSLVGCLLTFSAIGFTCYEFAISLDKFHIRDGFHLVFVFLAEALAGVSVAPLYAGLFFIMILLVVHATQMFVVETIVSSICDEYPERLRRNRRHVLTTVCALFILLSIPFCLSSGLFWMELLTQFVLTWPLVVIAFLECMAINWVYGVDNMLDNAKWIVGYWPPCYIFWKILFKFICPMVYLAILCFLWLDWNSIQYESYQFPYWSILTAWCIASFPLILIPIVGIWQFCIAKGTITQKWWRVLYPDDAWGPAMAIHRAEKFPLQIPEARRLLLPPEVEIASSRGVLQEEMPMSYDYNTSSAADVRSNRSTGHGATDVRSVAATNNTIPKFERETAI.

The interval 1–21 (MSVSSNDPEQRNGRGMASGNN) is disordered. Topologically, residues 1 to 74 (MSVSSNDPEQ…GNWSNKSDYL (74 aa)) are cytoplasmic. Transmembrane regions (helical) follow at residues 75–95 (LAVI…FLVF), 100–120 (AAFL…MFFM), and 152–172 (ISGF…FYLI). Residues 173-257 (NSFSFSIPWS…LSKGVDDFGT (85 aa)) lie on the Extracellular side of the membrane. Asparagine 192, asparagine 205, asparagine 211, and asparagine 222 each carry an N-linked (GlcNAc...) asparagine glycan. A run of 9 helical transmembrane segments spans residues 258-278 (LNWY…LCLF), 287-307 (VVYV…TRLL), 336-356 (AAVQ…TIAS), 368-388 (IWLV…LTFS), 422-442 (AGVS…LLVV), 476-496 (VCAL…LFWM), 502-522 (FVLT…INWV), 548-568 (ILFK…LWLD), and 584-604 (ILTA…VGIW). Topologically, residues 605–714 (QFCIAKGTIT…IPKFERETAI (110 aa)) are cytoplasmic.

This sequence belongs to the sodium:neurotransmitter symporter (SNF) (TC 2.A.22) family. As to quaternary structure, interacts with stn-1; part of the DGC. Body wall, and vulval and enteric muscles.

It is found in the cell membrane. Its subcellular location is the postsynaptic cell membrane. Functionally, mediates sodium-dependent uptake of acetylcholine at neuromuscular junctions during periods of increased synaptic activity, may also prevent spillover to adjacent synaptic sites. Not involved in the uptake of other neurotransmitters (GABA, glycine, proline and glutamate) and there was also no inhibition of uptake by adding an excess of other candidate substrates (GABA, glycine, taurine, creatine, proline, alanine, carnitine, glutamate and betaine). Required for muscle integrity; altered transport of acetylcholine due to loss of dystrophin-glycoprotein complex (DGC) function results in muscle degeneration. The sequence is that of Sodium-dependent acetylcholine transporter from Caenorhabditis elegans.